The following is a 706-amino-acid chain: MGGERQHYYGKHGTPQKYDPTFKGPIYHRGCTDVICCVFLLLAIVGYVAVGIIAWTHGDPRKVIYPTDSRGEFCGQKGTKNANKSYLFYFNIVKCASPLVLLEFQCPTPQICVEKCPNRYLTYLKAHGTQEFEYYKQFCVPGFKQNKAVTEVLRDGDCPAVLIPSKPLVQRCFPAIHAHKGVLMVGNETSYEDGHGFRKNITDLVEGAKKANGILEARHLAMRIFEDYTVSWYWIIIGLVIAMVLSLLFIILLRFLAGIMVWVMIVMVILVLGYGIFHCYMEYSRLRGEAGSDISLVDLGFQTDLRVYLHLRQTWMAFMIILSILEVIIILLLIFLRKRILIAIALIKEASRAVGYVMCSMLYPLVTFLLLCLCIAYWASTAIFLSTSNEAVYKIFSDTDCQAVGKTCNPENFSSSSEFHLCPGAHCQFAFYGGESTYHRALLGLQIFNAFMFFWLANFVLALGQVTLAGAFASYYWALKKPDDLPAFPLFSAFGRALRYHTGSLAFGSLLLAIVQIIRVMLEYLDQRLKAAENKFAKFLMTCLKCCFWCLEKFIKFLNRNAYIMIAIYGTNFCTSARNAFFLLMRNIIRVAVLDKVTDFLFLLGKLLIVGSVGILAFFFFTHRIRIVQDTAPPLNYYWVPILTVIVGSYLIAHGFFSVYGMCVDTLFLCFLEDLERNDGSMERPYFMSPTLKRLLNKTNRKPAES.

Residues 1–33 (MGGERQHYYGKHGTPQKYDPTFKGPIYHRGCTD) lie on the Cytoplasmic side of the membrane. Thr-14 carries the phosphothreonine modification. The chain crosses the membrane as a helical span at residues 34 to 54 (VICCVFLLLAIVGYVAVGIIA). Residues 55–232 (WTHGDPRKVI…RIFEDYTVSW (178 aa)) lie on the Extracellular side of the membrane. Asn-187 and Asn-200 each carry an N-linked (GlcNAc...) asparagine glycan. The helical transmembrane segment at 233 to 253 (YWIIIGLVIAMVLSLLFIILL) threads the bilayer. The Cytoplasmic portion of the chain corresponds to 254–256 (RFL). Residues 257–277 (AGIMVWVMIVMVILVLGYGIF) traverse the membrane as a helical segment. At 278 to 315 (HCYMEYSRLRGEAGSDISLVDLGFQTDLRVYLHLRQTW) the chain is on the extracellular side. A helical membrane pass occupies residues 316 to 336 (MAFMIILSILEVIIILLLIFL). Topologically, residues 337-364 (RKRILIAIALIKEASRAVGYVMCSMLYP) are cytoplasmic. A helical membrane pass occupies residues 365 to 385 (LVTFLLLCLCIAYWASTAIFL). At 386–440 (STSNEAVYKIFSDTDCQAVGKTCNPENFSSSSEFHLCPGAHCQFAFYGGESTYHR) the chain is on the extracellular side. A helical membrane pass occupies residues 441–461 (ALLGLQIFNAFMFFWLANFVL). Topologically, residues 462–504 (ALGQVTLAGAFASYYWALKKPDDLPAFPLFSAFGRALRYHTGS) are cytoplasmic. A helical transmembrane segment spans residues 505–525 (LAFGSLLLAIVQIIRVMLEYL). Residues 526 to 563 (DQRLKAAENKFAKFLMTCLKCCFWCLEKFIKFLNRNAY) are Extracellular-facing. The helical transmembrane segment at 564–584 (IMIAIYGTNFCTSARNAFFLL) threads the bilayer. Over 585-599 (MRNIIRVAVLDKVTD) the chain is Cytoplasmic. Residues 600 to 620 (FLFLLGKLLIVGSVGILAFFF) traverse the membrane as a helical segment. Over 621-638 (FTHRIRIVQDTAPPLNYY) the chain is Extracellular. Residues 639-659 (WVPILTVIVGSYLIAHGFFSV) traverse the membrane as a helical segment. The Cytoplasmic portion of the chain corresponds to 660–706 (YGMCVDTLFLCFLEDLERNDGSMERPYFMSPTLKRLLNKTNRKPAES).

Belongs to the CTL (choline transporter-like) family. Interacts with COCH. Post-translationally, N-glycosylated.

The protein resides in the cell membrane. It is found in the mitochondrion outer membrane. The catalysed reaction is choline(out) + n H(+)(in) = choline(in) + n H(+)(out). It carries out the reaction ethanolamine(out) + n H(+)(in) = ethanolamine(in) + n H(+)(out). Choline/H+ antiporter, mainly in mitochodria. Also acts as a low-affinity ethanolamine/H+ antiporter, regulating the supply of extracellular ethanolamine (Etn) for the CDP-Etn pathway, redistribute intracellular Etn and balance the CDP-Cho and CDP-Etn arms of the Kennedy pathway. The polypeptide is Choline transporter-like protein 2 (SLC44A2) (Sus scrofa (Pig)).